The chain runs to 204 residues: Pyrrolidone-carboxylate peptidase (204 aa).

Active-site residues include E78, C141, and H165.

Belongs to the peptidase C15 family. Homotetramer.

It localises to the cytoplasm. The catalysed reaction is Release of an N-terminal pyroglutamyl group from a polypeptide, the second amino acid generally not being Pro.. In terms of biological role, removes 5-oxoproline from various penultimate amino acid residues except L-proline. The polypeptide is Pyrrolidone-carboxylate peptidase (Levilactobacillus brevis (strain ATCC 367 / BCRC 12310 / CIP 105137 / JCM 1170 / LMG 11437 / NCIMB 947 / NCTC 947) (Lactobacillus brevis)).